The chain runs to 78 residues: Probable two-component-system connector protein YcgZ (78 aa).

Functionally, probably a connector protein for RcsB/C regulation of biofilm formation, providing additional signal input into the two-component signaling pathway. Partially antagonizes the activities of YmgA and AriR, proteins that, via the Rcs phosphorelay, promote the synthesis of colanic acid, an exopolysaccharide and matrix component. The protein is Probable two-component-system connector protein YcgZ (ycgZ) of Escherichia coli (strain K12).